We begin with the raw amino-acid sequence, 346 residues long: Secreted frizzled-related protein 4 (346 aa).

The first 18 residues, 1–18 (MFLSILVALCLWLHLALG), serve as a signal peptide directing secretion. The FZ domain maps to 19 to 139 (VRGAPCEAVR…VYDRGVCISP (121 aa)). Cystine bridges form between cysteine 24/cysteine 85, cysteine 32/cysteine 78, cysteine 69/cysteine 108, cysteine 97/cysteine 136, and cysteine 101/cysteine 125. N-linked (GlcNAc...) asparagine glycans are attached at residues asparagine 38 and asparagine 68. Residues asparagine 116, asparagine 194, and asparagine 240 are each glycosylated (N-linked (GlcNAc...) asparagine). Positions 178–307 (CKCKKVKPTL…IQDKKKTAGR (130 aa)) constitute an NTR domain. Positions 294 to 303 (QRRTIQDKKK) are enriched in basic and acidic residues. Residues 294–346 (QRRTIQDKKKTAGRTSRSNPPKPKGKPPAPKPASPKKNIKTRSAQKKTNPKKV) are disordered. Residues 313–326 (PPKPKGKPPAPKPA) are compositionally biased toward pro residues. Over residues 330–346 (KNIKTRSAQKKTNPKKV) the composition is skewed to basic residues.

It belongs to the secreted frizzled-related protein (sFRP) family.

It localises to the secreted. Its function is as follows. Soluble frizzled-related proteins (sFRPS) function as modulators of Wnt signaling through direct interaction with Wnts. They have a role in regulating cell growth and differentiation in specific cell types. SFRP4 plays a role in bone morphogenesis. May also act as a regulator of adult uterine morphology and function. May also increase apoptosis during ovulation possibly through modulation of FZ1/FZ4/WNT4 signaling. Has phosphaturic effects by specifically inhibiting sodium-dependent phosphate uptake. This is Secreted frizzled-related protein 4 (SFRP4) from Macaca mulatta (Rhesus macaque).